We begin with the raw amino-acid sequence, 68 residues long: Small ribosomal subunit protein bS21 (68 aa).

This sequence belongs to the bacterial ribosomal protein bS21 family.

The polypeptide is Small ribosomal subunit protein bS21 (Paracoccus denitrificans (strain Pd 1222)).